The following is a 215-amino-acid chain: 3-isopropylmalate dehydratase small subunit (215 aa).

It belongs to the LeuD family. LeuD type 1 subfamily. In terms of assembly, heterodimer of LeuC and LeuD.

It carries out the reaction (2R,3S)-3-isopropylmalate = (2S)-2-isopropylmalate. It participates in amino-acid biosynthesis; L-leucine biosynthesis; L-leucine from 3-methyl-2-oxobutanoate: step 2/4. Functionally, catalyzes the isomerization between 2-isopropylmalate and 3-isopropylmalate, via the formation of 2-isopropylmaleate. The polypeptide is 3-isopropylmalate dehydratase small subunit (Leptothrix cholodnii (strain ATCC 51168 / LMG 8142 / SP-6) (Leptothrix discophora (strain SP-6))).